Reading from the N-terminus, the 176-residue chain is Disulfide bond formation protein B (176 aa).

Residues 1 to 14 are Cytoplasmic-facing; it reads MLRFLNRCSRGRGA. A helical transmembrane segment spans residues 15–31; that stretch reads WLLLAFTALALELTALY. The Periplasmic segment spans residues 32-49; the sequence is FQHVMLLKPCVLCIYQRS. Cys-41 and Cys-44 form a disulfide bridge. Residues 50–65 traverse the membrane as a helical segment; that stretch reads ALWGVFAAGIVGAIAP. Over 66–71 the chain is Cytoplasmic; the sequence is SSLLRY. The helical transmembrane segment at 72–89 threads the bilayer; sequence PAIALWIYSSYEGIRLAW. Over 90-144 the chain is Periplasmic; that stretch reads KHTDILLNPSPFTTCDFFVSFPSWLPLDKWLPAIFNATGDCSERQWSFLSMEMPQ. A disulfide bridge links Cys-104 with Cys-130. Residues 145-163 form a helical membrane-spanning segment; that stretch reads WLLGIFAAYLLIAVLVLIA. At 164–176 the chain is on the cytoplasmic side; it reads QPFRSKRRDLFSR.

It belongs to the DsbB family.

Its subcellular location is the cell inner membrane. Required for disulfide bond formation in some periplasmic proteins. Acts by oxidizing the DsbA protein. The chain is Disulfide bond formation protein B from Pectobacterium atrosepticum (strain SCRI 1043 / ATCC BAA-672) (Erwinia carotovora subsp. atroseptica).